A 274-amino-acid polypeptide reads, in one-letter code: 2,3,4,5-tetrahydropyridine-2,6-dicarboxylate N-succinyltransferase (274 aa).

This sequence belongs to the transferase hexapeptide repeat family.

It is found in the cytoplasm. It carries out the reaction (S)-2,3,4,5-tetrahydrodipicolinate + succinyl-CoA + H2O = (S)-2-succinylamino-6-oxoheptanedioate + CoA. It functions in the pathway amino-acid biosynthesis; L-lysine biosynthesis via DAP pathway; LL-2,6-diaminopimelate from (S)-tetrahydrodipicolinate (succinylase route): step 1/3. This is 2,3,4,5-tetrahydropyridine-2,6-dicarboxylate N-succinyltransferase from Leptothrix cholodnii (strain ATCC 51168 / LMG 8142 / SP-6) (Leptothrix discophora (strain SP-6)).